The following is a 408-amino-acid chain: Arginine biosynthesis bifunctional protein ArgJ (408 aa).

Thr158, Lys184, Thr195, Glu281, Asn403, and Thr408 together coordinate substrate. Residue Thr195 is the Nucleophile of the active site.

Belongs to the ArgJ family. As to quaternary structure, heterotetramer of two alpha and two beta chains.

The protein resides in the cytoplasm. It carries out the reaction N(2)-acetyl-L-ornithine + L-glutamate = N-acetyl-L-glutamate + L-ornithine. The catalysed reaction is L-glutamate + acetyl-CoA = N-acetyl-L-glutamate + CoA + H(+). It functions in the pathway amino-acid biosynthesis; L-arginine biosynthesis; L-ornithine and N-acetyl-L-glutamate from L-glutamate and N(2)-acetyl-L-ornithine (cyclic): step 1/1. Its pathway is amino-acid biosynthesis; L-arginine biosynthesis; N(2)-acetyl-L-ornithine from L-glutamate: step 1/4. In terms of biological role, catalyzes two activities which are involved in the cyclic version of arginine biosynthesis: the synthesis of N-acetylglutamate from glutamate and acetyl-CoA as the acetyl donor, and of ornithine by transacetylation between N(2)-acetylornithine and glutamate. In Bacillus cereus (strain ATCC 14579 / DSM 31 / CCUG 7414 / JCM 2152 / NBRC 15305 / NCIMB 9373 / NCTC 2599 / NRRL B-3711), this protein is Arginine biosynthesis bifunctional protein ArgJ.